A 436-amino-acid polypeptide reads, in one-letter code: Putative permease MJ0326 (436 aa).

12 helical membrane passes run 24 to 44 (LAGI…PQIL), 51 to 71 (FGAV…VMGL), 79 to 99 (LAPG…GMGI), 103 to 123 (VALG…LTKI), 139 to 159 (TAVG…GIIV), 171 to 191 (LMEP…ILVS), 194 to 214 (VIGA…ILGI), 235 to 255 (LDIM…FFFV), 322 to 342 (GFVS…YPVV), 345 to 365 (IPPY…MRSV), 381 to 401 (ITLL…LGFI), and 416 to 436 (VHWL…YLSG).

This sequence belongs to the nucleobase:cation symporter-2 (NCS2) (TC 2.A.40) family. Azg-like subfamily.

The protein localises to the cell membrane. The sequence is that of Putative permease MJ0326 from Methanocaldococcus jannaschii (strain ATCC 43067 / DSM 2661 / JAL-1 / JCM 10045 / NBRC 100440) (Methanococcus jannaschii).